We begin with the raw amino-acid sequence, 94 residues long: Co-chaperonin GroES (94 aa).

This sequence belongs to the GroES chaperonin family. Heptamer of 7 subunits arranged in a ring. Interacts with the chaperonin GroEL.

It localises to the cytoplasm. Together with the chaperonin GroEL, plays an essential role in assisting protein folding. The GroEL-GroES system forms a nano-cage that allows encapsulation of the non-native substrate proteins and provides a physical environment optimized to promote and accelerate protein folding. GroES binds to the apical surface of the GroEL ring, thereby capping the opening of the GroEL channel. The chain is Co-chaperonin GroES from Clostridium botulinum.